The primary structure comprises 309 residues: Protein MAK16 homolog (309 aa).

The segment at 194–309 (EADQFSEEEA…IEEETENQAN (116 aa)) is disordered. 2 stretches are compositionally biased toward acidic residues: residues 195–227 (ADQF…DIED) and 235–270 (VEGD…DDEE). The segment covering 275–293 (ITKKRGPTFKPTKKTPQKR) has biased composition (basic residues). The span at 299-309 (EIEEETENQAN) shows a compositional bias: acidic residues.

The protein belongs to the MAK16 family.

It localises to the nucleus. Its subcellular location is the nucleolus. The chain is Protein MAK16 homolog (mak16l) from Dictyostelium discoideum (Social amoeba).